A 316-amino-acid polypeptide reads, in one-letter code: Thymidylate synthase (316 aa).

Residues Arg23 and 178–179 (RR) contribute to the dUMP site. Cys198 serves as the catalytic Nucleophile. Residues 218 to 221 (RSGD), Asn229, and 259 to 261 (HIY) contribute to the dUMP site. Asp221 contributes to the (6R)-5,10-methylene-5,6,7,8-tetrahydrofolate binding site. Residue Ala315 participates in (6R)-5,10-methylene-5,6,7,8-tetrahydrofolate binding.

This sequence belongs to the thymidylate synthase family. Bacterial-type ThyA subfamily. Homodimer.

The protein resides in the cytoplasm. It carries out the reaction dUMP + (6R)-5,10-methylene-5,6,7,8-tetrahydrofolate = 7,8-dihydrofolate + dTMP. Its pathway is pyrimidine metabolism; dTTP biosynthesis. In terms of biological role, catalyzes the reductive methylation of 2'-deoxyuridine-5'-monophosphate (dUMP) to 2'-deoxythymidine-5'-monophosphate (dTMP) while utilizing 5,10-methylenetetrahydrofolate (mTHF) as the methyl donor and reductant in the reaction, yielding dihydrofolate (DHF) as a by-product. This enzymatic reaction provides an intracellular de novo source of dTMP, an essential precursor for DNA biosynthesis. The chain is Thymidylate synthase from Latilactobacillus sakei subsp. sakei (strain 23K) (Lactobacillus sakei subsp. sakei).